We begin with the raw amino-acid sequence, 245 residues long: Octanoyltransferase (245 aa).

One can recognise a BPL/LPL catalytic domain in the interval 54–238 (GEATELVWLL…AFENIFGETR (185 aa)). Residues 92 to 99 (RGGQLTYH), 167 to 169 (AIG), and 180 to 182 (GIA) contribute to the substrate site. The active-site Acyl-thioester intermediate is the C198.

It belongs to the LipB family.

It localises to the cytoplasm. It carries out the reaction octanoyl-[ACP] + L-lysyl-[protein] = N(6)-octanoyl-L-lysyl-[protein] + holo-[ACP] + H(+). The protein operates within protein modification; protein lipoylation via endogenous pathway; protein N(6)-(lipoyl)lysine from octanoyl-[acyl-carrier-protein]: step 1/2. Its function is as follows. Catalyzes the transfer of endogenously produced octanoic acid from octanoyl-acyl-carrier-protein onto the lipoyl domains of lipoate-dependent enzymes. Lipoyl-ACP can also act as a substrate although octanoyl-ACP is likely to be the physiological substrate. This chain is Octanoyltransferase, found in Rhodopseudomonas palustris (strain ATCC BAA-98 / CGA009).